Consider the following 336-residue polypeptide: Probable allantoicase (336 aa).

This sequence belongs to the allantoicase family.

The catalysed reaction is allantoate + H2O = (S)-ureidoglycolate + urea. It functions in the pathway nitrogen metabolism; (S)-allantoin degradation; (S)-ureidoglycolate from allantoate (aminidohydrolase route): step 1/1. In Ralstonia nicotianae (strain ATCC BAA-1114 / GMI1000) (Ralstonia solanacearum), this protein is Probable allantoicase.